Here is a 253-residue protein sequence, read N- to C-terminus: Uracil-DNA glycosylase (253 aa).

Catalysis depends on Asp-79, which acts as the Proton acceptor.

This sequence belongs to the uracil-DNA glycosylase (UDG) superfamily. UNG family.

It localises to the cytoplasm. The catalysed reaction is Hydrolyzes single-stranded DNA or mismatched double-stranded DNA and polynucleotides, releasing free uracil.. Excises uracil residues from the DNA which can arise as a result of misincorporation of dUMP residues by DNA polymerase or due to deamination of cytosine. This is Uracil-DNA glycosylase from Xylella fastidiosa (strain M12).